The chain runs to 506 residues: NAD(P)H-quinone oxidoreductase subunit 2 (506 aa).

13 helical membrane-spanning segments follow: residues 14 to 34 (AIIP…VDLA), 42 to 62 (WAPI…ALQW), 79 to 99 (LAIA…LISW), 108 to 128 (PIGE…LLCG), 132 to 152 (LISI…LSGY), 167 to 187 (LLVG…LYGL), 206 to 226 (FITS…IAAV), 240 to 260 (PTPV…AFAI), 276 to 296 (LLFT…ALAQ), 302 to 322 (MLAY…VSGT), 330 to 350 (VLYL…VILF), 374 to 394 (LGLS…GFFG), and 409 to 429 (LLVI…ISVI).

This sequence belongs to the complex I subunit 2 family. As to quaternary structure, NDH-1 can be composed of about 15 different subunits; different subcomplexes with different compositions have been identified which probably have different functions.

Its subcellular location is the cellular thylakoid membrane. The enzyme catalyses a plastoquinone + NADH + (n+1) H(+)(in) = a plastoquinol + NAD(+) + n H(+)(out). It carries out the reaction a plastoquinone + NADPH + (n+1) H(+)(in) = a plastoquinol + NADP(+) + n H(+)(out). Its function is as follows. NDH-1 shuttles electrons from an unknown electron donor, via FMN and iron-sulfur (Fe-S) centers, to quinones in the respiratory and/or the photosynthetic chain. The immediate electron acceptor for the enzyme in this species is believed to be plastoquinone. Couples the redox reaction to proton translocation, and thus conserves the redox energy in a proton gradient. Cyanobacterial NDH-1 also plays a role in inorganic carbon-concentration. This chain is NAD(P)H-quinone oxidoreductase subunit 2, found in Prochlorococcus marinus (strain MIT 9312).